The sequence spans 154 residues: Ribonuclease P protein component (154 aa).

This sequence belongs to the RnpA family. Consists of a catalytic RNA component (M1 or rnpB) and a protein subunit.

The catalysed reaction is Endonucleolytic cleavage of RNA, removing 5'-extranucleotides from tRNA precursor.. Its function is as follows. RNaseP catalyzes the removal of the 5'-leader sequence from pre-tRNA to produce the mature 5'-terminus. It can also cleave other RNA substrates such as 4.5S RNA. The protein component plays an auxiliary but essential role in vivo by binding to the 5'-leader sequence and broadening the substrate specificity of the ribozyme. In Chlorobaculum tepidum (strain ATCC 49652 / DSM 12025 / NBRC 103806 / TLS) (Chlorobium tepidum), this protein is Ribonuclease P protein component.